The primary structure comprises 82 residues: Small ribosomal subunit protein bS16 (82 aa).

Belongs to the bacterial ribosomal protein bS16 family.

The sequence is that of Small ribosomal subunit protein bS16 from Glaesserella parasuis serovar 5 (strain SH0165) (Haemophilus parasuis).